Reading from the N-terminus, the 348-residue chain is Rhodopsin (348 aa).

An N-acetylmethionine modification is found at methionine 1. Over 1–36 the chain is Extracellular; the sequence is MNGTEGPNFYVPFSNATGVVRSPFEYPQYYLAEPWQ. N-linked (GlcNAc...) asparagine glycosylation is found at asparagine 2 and asparagine 15. The helical transmembrane segment at 37 to 61 threads the bilayer; that stretch reads FSMLAAYMFMLIVLGFPINFLTLYV. Residues 62-73 are Cytoplasmic-facing; the sequence is TVQHKKLRTPLN. The helical transmembrane segment at 74-96 threads the bilayer; the sequence is YILLNLAVADLFMVFGGFTTTLY. At 97–110 the chain is on the extracellular side; that stretch reads TSLHGYFVFGPTGC. Cysteine 110 and cysteine 187 are oxidised to a cystine. A helical transmembrane segment spans residues 111–133; that stretch reads NLEGFFATLGGEIALWSLVVLAI. The 'Ionic lock' involved in activated form stabilization signature appears at 134–136; that stretch reads ERY. Over 134 to 152 the chain is Cytoplasmic; it reads ERYVVVCKPMSNFRFGENH. Residues 153–173 traverse the membrane as a helical segment; it reads AIMGLVFTWIMALACAAPPLV. The Extracellular segment spans residues 174–202; sequence GWSRYIPEGMQCSCGIDYYTLKPEVNNES. Residue glutamate 201 coordinates Zn(2+). A helical transmembrane segment spans residues 203-224; sequence FVIYMFVVHFFIPLFVIFFCYG. At 225-252 the chain is on the cytoplasmic side; the sequence is QLVFTVKEAAAQQQESATTQKAEKEVTR. A helical membrane pass occupies residues 253 to 274; it reads MVIIMVIAFLICWLPYAGVAFY. Topologically, residues 275 to 286 are extracellular; the sequence is IFTHQGSNFGPI. Glutamine 279 provides a ligand contact to Zn(2+). The chain crosses the membrane as a helical span at residues 287–308; that stretch reads FMTLPAFFAKTASIYNPVIYIM. At lysine 296 the chain carries N6-(retinylidene)lysine. The Cytoplasmic segment spans residues 309-348; the sequence is MNKQFRTCMITTLCCGKNPLGDDEASTTASKTETSQVAPA. 2 S-palmitoyl cysteine lipidation sites follow: cysteine 322 and cysteine 323. Positions 330-348 are interaction with SAG; sequence DDEASTTASKTETSQVAPA. A Phosphoserine modification is found at serine 334. 2 positions are modified to phosphothreonine: threonine 335 and threonine 336. Residue serine 338 is modified to Phosphoserine. Phosphothreonine is present on residues threonine 340 and threonine 342. Serine 343 is modified (phosphoserine).

Belongs to the G-protein coupled receptor 1 family. Opsin subfamily. As to quaternary structure, homodimer. May form a complex composed of RHO, GRK1 and RCVRN in a Ca(2+)-dependent manner; RCVRN prevents the interaction between GRK1 and RHO. Interacts with GRK1. Interacts (phosphorylated form) with SAG. Interacts with GNAT1. Interacts with GNAT3. SAG and G-proteins compete for a common binding site. Interacts with PRCD; the interaction promotes PRCD stability. Forms a complex with ASAP1 and ARF4. Forms a complex with ASAP1, RAB11A, Rabin8/RAB3IP, ARF4 and RAB11FIP3; the complex regulates Golgi-to-cilia rhodopsin/RHO transport in photoreceptors. Phosphorylated on some or all of the serine and threonine residues present in the C-terminal region. In terms of processing, contains one covalently linked retinal chromophore. Upon light absorption, the covalently bound 11-cis-retinal is converted to all-trans-retinal. After hydrolysis of the Schiff base and release of the covalently bound all-trans-retinal, active rhodopsin is regenerated by binding of a fresh molecule of 11-cis-retinal.

It localises to the membrane. It is found in the cell projection. The protein resides in the cilium. The protein localises to the photoreceptor outer segment. Photoreceptor required for image-forming vision at low light intensity. Required for photoreceptor cell viability after birth. Light-induced isomerization of 11-cis to all-trans retinal triggers a conformational change that activates signaling via G-proteins. Subsequent receptor phosphorylation mediates displacement of the bound G-protein alpha subunit by the arrestin SAG and terminates signaling. The chain is Rhodopsin (RHO) from Otolemur crassicaudatus (Brown greater galago).